A 297-amino-acid polypeptide reads, in one-letter code: Phosphatidylserine decarboxylase proenzyme (297 aa).

Catalysis depends on charge relay system; for autoendoproteolytic cleavage activity residues Asp-112, His-168, and Ser-255. The active-site Schiff-base intermediate with substrate; via pyruvic acid; for decarboxylase activity is the Ser-255. Ser-255 is modified (pyruvic acid (Ser); by autocatalysis).

This sequence belongs to the phosphatidylserine decarboxylase family. PSD-B subfamily. Prokaryotic type II sub-subfamily. Heterodimer of a large membrane-associated beta subunit and a small pyruvoyl-containing alpha subunit. Pyruvate serves as cofactor. Post-translationally, is synthesized initially as an inactive proenzyme. Formation of the active enzyme involves a self-maturation process in which the active site pyruvoyl group is generated from an internal serine residue via an autocatalytic post-translational modification. Two non-identical subunits are generated from the proenzyme in this reaction, and the pyruvate is formed at the N-terminus of the alpha chain, which is derived from the carboxyl end of the proenzyme. The autoendoproteolytic cleavage occurs by a canonical serine protease mechanism, in which the side chain hydroxyl group of the serine supplies its oxygen atom to form the C-terminus of the beta chain, while the remainder of the serine residue undergoes an oxidative deamination to produce ammonia and the pyruvoyl prosthetic group on the alpha chain. During this reaction, the Ser that is part of the protease active site of the proenzyme becomes the pyruvoyl prosthetic group, which constitutes an essential element of the active site of the mature decarboxylase.

It is found in the cell membrane. The catalysed reaction is a 1,2-diacyl-sn-glycero-3-phospho-L-serine + H(+) = a 1,2-diacyl-sn-glycero-3-phosphoethanolamine + CO2. The protein operates within phospholipid metabolism; phosphatidylethanolamine biosynthesis; phosphatidylethanolamine from CDP-diacylglycerol: step 2/2. Its function is as follows. Catalyzes the formation of phosphatidylethanolamine (PtdEtn) from phosphatidylserine (PtdSer). The chain is Phosphatidylserine decarboxylase proenzyme from Clostridium tetani (strain Massachusetts / E88).